A 59-amino-acid chain; its full sequence is MRLSYLSLALAIIFVLTIMHASNVEAKASADPEPDAVGSINVKNLMNMIREQITSRLKK.

The signal sequence occupies residues 1–21 (MRLSYLSLALAIIFVLTIMHA). A propeptide spanning residues 22–38 (SNVEAKASADPEPDAVG) is cleaved from the precursor.

Expressed by the venom gland.

It is found in the secreted. Functionally, may have antimicrobial properties, like most ant linear peptides. This is U-myrmeciitoxin(01)-Mg5b from Myrmecia gulosa (Red bulldog ant).